The sequence spans 573 residues: Sulfate adenylyltransferase (573 aa).

Residues 1 to 169 (MANPPHGGIL…VEAVNKLNHY (169 aa)) are N-terminal. Residues 170-394 (DYVGLRFTPA…LRESNPPRSK (225 aa)) are catalytic. Sulfate is bound at residue glutamine 197. Residues 197–200 (QTRN) and 291–294 (GRDH) each bind ATP. Catalysis depends on residues threonine 198, arginine 199, and asparagine 200. Arginine 199 serves as a coordination point for sulfate. Alanine 295 provides a ligand contact to sulfate. Leucine 333 serves as a coordination point for ATP. Residues 395–573 (QGFTVFLTGY…LESQGFLEKA (179 aa)) form an allosteric regulation domain; adenylyl-sulfate kinase-like region. 3'-phosphoadenylyl sulfate is bound by residues 434–437 (DTVR), arginine 451, 477–478 (IA), and arginine 515.

The protein in the N-terminal section; belongs to the sulfate adenylyltransferase family. This sequence in the C-terminal section; belongs to the APS kinase family. As to quaternary structure, homohexamer. Dimer of trimers.

The protein resides in the cytoplasm. The enzyme catalyses sulfate + ATP + H(+) = adenosine 5'-phosphosulfate + diphosphate. Its pathway is sulfur metabolism; hydrogen sulfide biosynthesis; sulfite from sulfate: step 1/3. Allosterically inhibited by 3'-phosphoadenosine 5'-phosphosulfate (PAPS). Functionally, catalyzes the first intracellular reaction of sulfate assimilation, forming adenosine-5'-phosphosulfate (APS) from inorganic sulfate and ATP. Plays an important role in sulfate activation as a component of the biosynthesis pathway of sulfur-containing amino acids. In Coccidioides immitis (strain RS) (Valley fever fungus), this protein is Sulfate adenylyltransferase.